Reading from the N-terminus, the 481-residue chain is CUGBP Elav-like family member 6 (481 aa).

Residues 1–12 (MAAAPGGSAQPA) show a composition bias toward low complexity. The disordered stretch occupies residues 1-34 (MAAAPGGSAQPAGPGPRLGFSTADSGVGMSGLNP). 3 RRM domains span residues 46–127 (IKLF…PAAS), 134–214 (RKLF…LADT), and 396–474 (CNLF…LKRP).

The protein belongs to the CELF/BRUNOL family. Expressed mainly in kidney, brain and testis and present in other tissues albeit at lower levels. Also expressed in fetal kidney.

It is found in the nucleus. The protein localises to the cytoplasm. Its function is as follows. RNA-binding protein implicated in the regulation of pre-mRNA alternative splicing. Mediates exon inclusion and/or exclusion in pre-mRNA that are subject to tissue-specific and developmentally regulated alternative splicing. Specifically activates exon 5 inclusion of TNNT2 in a muscle-specific splicing enhancer (MSE)-dependent manner. Promotes also exon exclusion of INSR pre-mRNA. The chain is CUGBP Elav-like family member 6 (CELF6) from Homo sapiens (Human).